The sequence spans 343 residues: Glycerol-3-phosphate dehydrogenase [NAD(P)+] (343 aa).

Residues Ser-11, Trp-12, Arg-32, and Lys-106 each coordinate NADPH. The sn-glycerol 3-phosphate site is built by Lys-106, Gly-137, and Ser-139. Ala-141 lines the NADPH pocket. 5 residues coordinate sn-glycerol 3-phosphate: Lys-192, Asp-245, Ser-255, Arg-256, and Asn-257. The active-site Proton acceptor is Lys-192. Arg-256 is a binding site for NADPH. NADPH is bound by residues Val-280 and Glu-282.

The protein belongs to the NAD-dependent glycerol-3-phosphate dehydrogenase family.

Its subcellular location is the cytoplasm. It catalyses the reaction sn-glycerol 3-phosphate + NAD(+) = dihydroxyacetone phosphate + NADH + H(+). The catalysed reaction is sn-glycerol 3-phosphate + NADP(+) = dihydroxyacetone phosphate + NADPH + H(+). It participates in membrane lipid metabolism; glycerophospholipid metabolism. Its function is as follows. Catalyzes the reduction of the glycolytic intermediate dihydroxyacetone phosphate (DHAP) to sn-glycerol 3-phosphate (G3P), the key precursor for phospholipid synthesis. This chain is Glycerol-3-phosphate dehydrogenase [NAD(P)+], found in Syntrophomonas wolfei subsp. wolfei (strain DSM 2245B / Goettingen).